The sequence spans 447 residues: Protein king tubby (447 aa).

The disordered stretch occupies residues 54–84 (GSPQNPDQILSNNSSSITMNSSRNNSNNMRS). Low complexity predominate over residues 62–84 (ILSNNSSSITMNSSRNNSNNMRS). Position 136 is a phosphoserine (Ser-136). Residues 168 to 182 (EGAAMEGSNGAANGS) are compositionally biased toward low complexity. The disordered stretch occupies residues 168–191 (EGAAMEGSNGAANGSGSVGGSGES).

It belongs to the TUB family.

The protein localises to the cytoplasm. It localises to the nucleus. The protein resides in the cell projection. Its subcellular location is the cilium membrane. It is found in the rhabdomere. The sequence is that of Protein king tubby from Drosophila grimshawi (Hawaiian fruit fly).